A 431-amino-acid chain; its full sequence is Nocturnin (431 aa).

A mitochondrion-targeting transit peptide spans 1–75; the sequence is MFHSPRRLCS…SMGTGTSRLY (75 aa). Residues 20-31 show a composition bias toward low complexity; that stretch reads LRRLPAPGLRRP. The disordered stretch occupies residues 20–41; that stretch reads LRRLPAPGLRRPLSPPAAVPRP. Positions 32–41 are enriched in pro residues; sequence LSPPAAVPRP. Glutamate 195 is a binding site for Mg(2+). Substrate contacts are provided by residues glutamate 195, 219–221, asparagine 263, 286–289, and 324–326; these read KPW, HLKA, and DFN. The interval 343-353 is interaction with PPARG; the sequence is NLNSAYKLLSA. Histidine 414 is a binding site for substrate.

This sequence belongs to the CCR4/nocturin family. Interacts with PPARG. Mg(2+) is required as a cofactor. In terms of tissue distribution, adipose tissue. Expression is higher in subcutaneous adipose tissue as compared to visceral adipose tissue.

The protein localises to the cytoplasm. Its subcellular location is the nucleus. The protein resides in the perinuclear region. It is found in the mitochondrion. The enzyme catalyses NADP(+) + H2O = phosphate + NAD(+). The catalysed reaction is NADPH + H2O = phosphate + NADH. Its function is as follows. Phosphatase which catalyzes the conversion of NADP(+) to NAD(+) and of NADPH to NADH. Shows a small preference for NADPH over NADP(+). Represses translation and promotes degradation of target mRNA molecules. Plays an important role in post-transcriptional regulation of metabolic genes under circadian control. Exerts a rhythmic post-transcriptional control of genes necessary for metabolic functions including nutrient absorption, glucose/insulin sensitivity, lipid metabolism, adipogenesis, inflammation and osteogenesis. Plays an important role in favoring adipogenesis over osteoblastogenesis and acts as a key regulator of the adipogenesis/osteogenesis balance. Promotes adipogenesis by facilitating PPARG nuclear translocation which activates its transcriptional activity. Regulates circadian expression of NOS2 in the liver and negatively regulates the circadian expression of IGF1 in the bone. Critical for proper development of early embryos. This chain is Nocturnin, found in Homo sapiens (Human).